A 95-amino-acid polypeptide reads, in one-letter code: Protein TusB (95 aa).

This sequence belongs to the DsrH/TusB family. As to quaternary structure, heterohexamer, formed by a dimer of trimers. The hexameric TusBCD complex contains 2 copies each of TusB, TusC and TusD. The TusBCD complex interacts with TusE.

It localises to the cytoplasm. Part of a sulfur-relay system required for 2-thiolation of 5-methylaminomethyl-2-thiouridine (mnm(5)s(2)U) at tRNA wobble positions. This chain is Protein TusB, found in Pectobacterium parmentieri.